The chain runs to 2207 residues: Genome polyprotein (2207 aa).

Glycine 2 is lipidated: N-myristoyl glycine; by host. The Cytoplasmic segment spans residues 2–1518 (GAQVSSQKVG…NINRAMTILQ (1517 aa)). The amphipathic alpha-helix stretch occupies residues 579–599 (GLGDLIEGVVEGVTRNALTPL). A compositionally biased stretch (polar residues) spans 597 to 613 (TPLTPANNLPDTQSSGP). Disordered regions lie at residues 597 to 620 (TPLT…KETP) and 628 to 647 (GATN…VIQK). Catalysis depends on for protease 2A activity residues histidine 899 and aspartate 917. Positions 934 and 936 each coordinate Zn(2+). Residue cysteine 988 is the For protease 2A activity of the active site. The Zn(2+) site is built by cysteine 994 and histidine 996. Residues 1126–1198 (GDSWLKKFTE…HQSCPSQEHQ (73 aa)) form a membrane-binding region. The tract at residues 1126–1264 (GDSWLKKFTE…SPGTGKSVAT (139 aa)) is oligomerization. The interval 1147-1151 (SNKIS) is RNA-binding. In terms of domain architecture, SF3 helicase spans 1230-1386 (EHTINNYVQF…SEYSRDGKLN (157 aa)). 1254 to 1261 (GSPGTGKS) provides a ligand contact to ATP. Residues cysteine 1394, cysteine 1397, cysteine 1406, and cysteine 1411 each contribute to the Zn(2+) site. The C4-type zinc finger occupies 1394–1411 (CKNCHHPANFKRCCPLVC). Residues 1438–1445 (ERNRRSSI) are RNA-binding. The tract at residues 1449–1454 (MEALFQ) is oligomerization. An intramembrane segment occupies 1519-1534 (AVTTFAAVAGVVYVMY). Topologically, residues 1535 to 2207 (KLFAGHQGAY…TLYRRWLDSF (673 aa)) are cytoplasmic. The residue at position 1544 (tyrosine 1544) is an O-(5'-phospho-RNA)-tyrosine. In terms of domain architecture, Peptidase C3 spans 1564-1742 (GPGFDYAVAM…FAAALKRSYF (179 aa)). Catalysis depends on for protease 3C activity residues histidine 1603, glutamate 1634, and cysteine 1710. One can recognise a RdRp catalytic domain in the interval 1973–2088 (EKLFAFDYTG…SYPHEVDASL (116 aa)). Positions 1979 and 2074 each coordinate Mg(2+).

It belongs to the picornaviruses polyprotein family. In terms of assembly, interacts with capsid protein VP1 and capsid protein VP3 to form heterotrimeric protomers. Interacts with capsid protein VP0, and capsid protein VP3 to form heterotrimeric protomers. Interacts with human PVR. Five protomers subsequently associate to form pentamers which serve as building blocks for the capsid. Interacts with capsid protein VP2, capsid protein VP3 and capsid protein VP4 following cleavage of capsid protein VP0. As to quaternary structure, interacts with capsid protein VP1 and capsid protein VP3 in the mature capsid. In terms of assembly, interacts with capsid protein VP0 and capsid protein VP1 to form heterotrimeric protomers. Five protomers subsequently associate to form pentamers which serve as building blocks for the capsid. Interacts with capsid protein VP4 in the mature capsid. Interacts with protein 2C; this interaction may be important for virion morphogenesis. Interacts with capsid protein VP1 and capsid protein VP3. As to quaternary structure, homodimer. In terms of assembly, homohexamer; forms a hexameric ring structure with 6-fold symmetry characteristic of AAA+ ATPases. Interacts (via N-terminus) with host RTN3 (via reticulon domain); this interaction is important for viral replication. Interacts with capsid protein VP3; this interaction may be important for virion morphogenesis. Interacts with protein 3CD. As to quaternary structure, homodimer. Interacts with host GBF1. Interacts (via GOLD domain) with host ACBD3 (via GOLD domain); this interaction allows the formation of a viral protein 3A/ACBD3 heterotetramer with a 2:2 stoichiometry, which will stimulate the recruitment of host PI4KB in order to synthesize PI4P at the viral RNA replication sites. In terms of assembly, interacts with RNA-directed RNA polymerase. Interacts with protein 3AB and with RNA-directed RNA polymerase. As to quaternary structure, interacts with Viral protein genome-linked and with protein 3CD. Mg(2+) is required as a cofactor. In terms of processing, specific enzymatic cleavages in vivo by the viral proteases yield processing intermediates and the mature proteins. Myristoylation is required for the formation of pentamers during virus assembly. Further assembly of 12 pentamers and a molecule of genomic RNA generates the provirion. Post-translationally, during virion maturation, immature virions are rendered infectious following cleavage of VP0 into VP4 and VP2. This maturation seems to be an autocatalytic event triggered by the presence of RNA in the capsid and it is followed by a conformational change infectious virion. In terms of processing, myristoylation is required during RNA encapsidation and formation of the mature virus particle. VPg is uridylylated by the polymerase into VPg-pUpU. This acts as a nucleotide-peptide primer for the genomic RNA replication.

The protein localises to the virion. It is found in the host cytoplasm. Its subcellular location is the host cytoplasmic vesicle membrane. The protein resides in the host nucleus. It catalyses the reaction a ribonucleoside 5'-triphosphate + H2O = a ribonucleoside 5'-diphosphate + phosphate + H(+). It carries out the reaction Selective cleavage of Tyr-|-Gly bond in the picornavirus polyprotein.. The enzyme catalyses RNA(n) + a ribonucleoside 5'-triphosphate = RNA(n+1) + diphosphate. The catalysed reaction is Selective cleavage of Gln-|-Gly bond in the poliovirus polyprotein. In other picornavirus reactions Glu may be substituted for Gln, and Ser or Thr for Gly.. Its activity is regulated as follows. Replication or transcription is subject to high level of random mutations by the nucleotide analog ribavirin. Forms an icosahedral capsid of pseudo T=3 symmetry with capsid proteins VP2 and VP3. The capsid is 300 Angstroms in diameter, composed of 60 copies of each capsid protein and enclosing the viral positive strand RNA genome. Capsid protein VP1 mainly forms the vertices of the capsid. Capsid protein VP1 interacts with host cell receptor PVR to provide virion attachment to target host cells. This attachment induces virion internalization predominantly through clathrin- and caveolin-independent endocytosis in Hela cells and through caveolin-mediated endocytosis in brain microvascular endothelial cells. Tyrosine kinases are probably involved in the entry process. Virus binding to PVR induces increased junctional permeability and rearrangement of junctional proteins. Modulation of endothelial tight junctions, as well as cytolytic infection of endothelial cells themselves, may result in loss of endothelial integrity which may help the virus to reach the CNS. After binding to its receptor, the capsid undergoes conformational changes. Capsid protein VP1 N-terminus (that contains an amphipathic alpha-helix) and capsid protein VP4 are externalized. Together, they shape a pore in the host membrane through which viral genome is translocated to host cell cytoplasm. In terms of biological role, forms an icosahedral capsid of pseudo T=3 symmetry with capsid proteins VP2 and VP3. The capsid is 300 Angstroms in diameter, composed of 60 copies of each capsid protein and enclosing the viral positive strand RNA genome. Functionally, lies on the inner surface of the capsid shell. After binding to the host receptor, the capsid undergoes conformational changes. Capsid protein VP4 is released, Capsid protein VP1 N-terminus is externalized, and together, they shape a pore in the host membrane through which the viral genome is translocated into the host cell cytoplasm. Its function is as follows. Component of immature procapsids, which is cleaved into capsid proteins VP4 and VP2 after maturation. Allows the capsid to remain inactive before the maturation step. Cysteine protease that cleaves viral polyprotein and specific host proteins. It is responsible for the autocatalytic cleavage between the P1 and P2 regions, which is the first cleavage occurring in the polyprotein. Also cleaves the host translation initiation factor EIF4G1, in order to shut down the capped cellular mRNA translation. Inhibits the host nucleus-cytoplasm protein and RNA trafficking by cleaving host members of the nuclear pores including NUP98, NUP62 and NUP153. Counteracts stress granule formation probably by antagonizing its assembly or promoting its dissassembly. Cleaves and inhibits host IFIH1/MDA5, thereby inhibiting the type-I IFN production and the establishment of the antiviral state. Cleaves and inhibits host MAVS, thereby inhibiting the type-I IFN production and the establishment of the antiviral state. In terms of biological role, plays an essential role in the virus replication cycle by acting as a viroporin. Creates a pore in the host endoplasmic reticulum and as a consequence releases Ca2+ in the cytoplasm of infected cell. In turn, high levels of cytoplasmic calcium may trigger membrane trafficking and transport of viral ER-associated proteins to viroplasms, sites of viral genome replication. Functionally, induces and associates with structural rearrangements of intracellular membranes. Displays RNA-binding, nucleotide binding and NTPase activities. May play a role in virion morphogenesis and viral RNA encapsidation by interacting with the capsid protein VP3. Its function is as follows. Localizes the viral replication complex to the surface of membranous vesicles. Together with protein 3CD binds the Cis-Active RNA Element (CRE) which is involved in RNA synthesis initiation. Acts as a cofactor to stimulate the activity of 3D polymerase, maybe through a nucleid acid chaperone activity. Localizes the viral replication complex to the surface of membranous vesicles. It inhibits host cell endoplasmic reticulum-to-Golgi apparatus transport and causes the disassembly of the Golgi complex, possibly through GBF1 interaction. This would result in depletion of MHC, trail receptors and IFN receptors at the host cell surface. Plays an essential role in viral RNA replication by recruiting ACBD3 and PI4KB at the viral replication sites, thereby allowing the formation of the rearranged membranous structures where viral replication takes place. In terms of biological role, acts as a primer for viral RNA replication and remains covalently bound to viral genomic RNA. VPg is uridylylated prior to priming replication into VPg-pUpU. The oriI viral genomic sequence may act as a template for this. The VPg-pUpU is then used as primer on the genomic RNA poly(A) by the RNA-dependent RNA polymerase to replicate the viral genome. During genome replication, the VPg-RNA linkage is removed by the host TDP2, thereby accelerating replication. During the late stage of the replication cycle, host TDP2 is excluded from sites of viral RNA synthesis and encapsidation, allowing for the generation of progeny virions. Functionally, involved in the viral replication complex and viral polypeptide maturation. It exhibits protease activity with a specificity and catalytic efficiency that is different from protease 3C. Protein 3CD lacks polymerase activity. Protein 3CD binds to the 5'UTR of the viral genome. Its function is as follows. Major viral protease that mediates proteolytic processing of the polyprotein. Cleaves host EIF5B, contributing to host translation shutoff. Also cleaves host PABPC1, contributing to host translation shutoff. Cleaves host RIGI and thus contributes to the inhibition of type I interferon production. Cleaves host NLRP1, triggers host N-glycine-mediated degradation of the autoinhibitory NLRP1 N-terminal fragment. Inhibits the integrated stress response (ISR) in the infected cell by cleaving host G3BP1. Stress granule formation is thus inhibited, which allows protein synthesis and viral replication. Replicates the viral genomic RNA on the surface of intracellular membranes. May form linear arrays of subunits that propagate along a strong head-to-tail interaction called interface-I. Covalently attaches UMP to a tyrosine of VPg, which is used to prime RNA synthesis. The positive stranded RNA genome is first replicated at virus induced membranous vesicles, creating a dsRNA genomic replication form. This dsRNA is then used as template to synthesize positive stranded RNA genomes. ss(+)RNA genomes are either translated, replicated or encapsidated. This is Genome polyprotein from Homo sapiens (Human).